Here is a 164-residue protein sequence, read N- to C-terminus: Galectin-3 (164 aa).

In terms of domain architecture, Galectin spans 9-154 (STVDLSEPLK…FSDVLGVTVL (146 aa)). A carbohydrate is bound by residues His-60, Arg-64, Asn-73, and Glu-84.

As to quaternary structure, homotetramer. Oligomerization is required for carbohydrate binding.

The protein localises to the secreted. It is found in the extracellular space. Its subcellular location is the extracellular matrix. The protein resides in the cell wall. In terms of biological role, binds lactose. May play a role in fruiting body formation. The polypeptide is Galectin-3 (Cgl3) (Coprinopsis cinerea (strain Okayama-7 / 130 / ATCC MYA-4618 / FGSC 9003) (Inky cap fungus)).